The sequence spans 230 residues: Eukaryotic translation initiation factor 4E-1 (230 aa).

The segment at Met-1–Asn-53 is disordered. The span at Lys-8–Arg-19 shows a compositional bias: polar residues. A compositionally biased stretch (acidic residues) spans Asn-22–Asp-38. Low complexity predominate over residues Ala-39–Ala-49. EIF4G-binding regions lie at residues His-55–Glu-58 and Phe-65–His-101. MRNA contacts are provided by residues Lys-73–Gly-78, Lys-105, and Trp-123–Glu-124. The cysteines at positions 128 and 166 are disulfide-linked. The tract at residues Tyr-149–Gln-158 is EIF4G-binding. MRNA contacts are provided by residues Arg-173 to Lys-178 and Lys-218 to Arg-222.

This sequence belongs to the eukaryotic initiation factor 4E family. EIF4F is a multi-subunit complex, the composition of which varies with external and internal environmental conditions. It is composed of at least EIF4A, EIF4E and EIF4G. EIF4E is also known to interact with other partners. In higher plants two isoforms of EIF4F have been identified, named isoform EIF4F and isoform EIF(iso)4F. Isoform EIF4F has subunits p220 and p26, whereas isoform EIF(iso)4F has subunits p82 and p28. As to quaternary structure, (Microbial infection) Interacts with potyvirus viral genome-linked protein (VPg); this interaction is possible in susceptible hosts but impaired in resistant plants. In terms of processing, according to the redox status, the Cys-128-Cys-166 disulfide bridge may have a role in regulating protein function by affecting its ability to bind capped mRNA.

The protein localises to the nucleus. It localises to the cytoplasm. In terms of biological role, component of the protein complex eIF4F, which is involved in the recognition of the mRNA cap, ATP-dependent unwinding of 5'-terminal secondary structure and recruitment of mRNA to the ribosome. Recognizes and binds the 7-methylguanosine-containing mRNA cap during an early step in the initiation of protein synthesis and facilitates ribosome binding by inducing the unwinding of the mRNAs secondary structures. Key component of recessive resistance to potyviruses. (Microbial infection) Susceptibility host factor required for viral infection by recruiting viral RNAs to the host ribosomal complex via an interaction with viral genome-linked protein (VPg). The polypeptide is Eukaryotic translation initiation factor 4E-1 (Phaseolus vulgaris (Kidney bean)).